The following is a 287-amino-acid chain: Genetic interactor of prohibitin 7, mitochondrial (287 aa).

Residues 1–24 constitute a mitochondrion transit peptide; sequence MVLSNVKIFRLKSHRAFRIGPMIK. A helical membrane pass occupies residues 250-266; sequence SKAIISFVVFVSIYVWL.

This sequence belongs to the GEP7 family.

The protein resides in the mitochondrion membrane. In terms of biological role, involved in respiratory growth and required for cell survival in the absence of prohibitins or GEM1. This Saccharomyces cerevisiae (strain ATCC 204508 / S288c) (Baker's yeast) protein is Genetic interactor of prohibitin 7, mitochondrial (GEP7).